A 305-amino-acid polypeptide reads, in one-letter code: Coiled-coil domain-containing protein 69 (305 aa).

Glycine 2 is lipidated: N-myristoyl glycine. Positions 13 to 41 (LRKKKRQKAHQEGLTSKELNDLNAKSQEP) are disordered. Coiled coils occupy residues 42-167 (NELL…SVLS) and 216-278 (MERN…KEQN).

The protein belongs to the CCDC69 family.

It localises to the cytoplasm. It is found in the cytoskeleton. The protein resides in the spindle. Its subcellular location is the midbody. May act as a scaffold to regulate the recruitment and assembly of spindle midzone components. The sequence is that of Coiled-coil domain-containing protein 69 (ccdc69) from Xenopus tropicalis (Western clawed frog).